The sequence spans 81 residues: Sulfur carrier protein TusA (81 aa).

Catalysis depends on Cys-19, which acts as the Cysteine persulfide intermediate.

The protein belongs to the sulfur carrier protein TusA family. Interacts with IscS.

Its subcellular location is the cytoplasm. It functions in the pathway tRNA modification. Sulfur carrier protein involved in sulfur trafficking in the cell. Part of a sulfur-relay system required for 2-thiolation during synthesis of 2-thiouridine of the modified wobble base 5-methylaminomethyl-2-thiouridine (mnm(5)s(2)U) in tRNA. Interacts with IscS and stimulates its cysteine desulfurase activity. Accepts an activated sulfur from IscS, which is then transferred to TusD, and thus determines the direction of sulfur flow from IscS to 2-thiouridine formation. Also appears to be involved in sulfur transfer for the biosynthesis of molybdopterin. The polypeptide is Sulfur carrier protein TusA (Escherichia coli O17:K52:H18 (strain UMN026 / ExPEC)).